The primary structure comprises 143 residues: Hemoglobin subunit alpha-2 (143 aa).

N-acetylserine is present on S2. The Globin domain maps to S2 to R143. Heme b-binding residues include H60 and H89.

The protein belongs to the globin family. In terms of assembly, hb 2 is a heterotetramer of two alpha-2 and two beta chains. As to expression, red blood cells.

Its function is as follows. Involved in oxygen transport from gills to the various peripheral tissues. In Cottoperca gobio (Frogmouth), this protein is Hemoglobin subunit alpha-2.